The primary structure comprises 168 residues: Photosystem I assembly protein Ycf3 (168 aa).

TPR repeat units follow at residues 35–68, 72–105, and 120–153; these read AFTY…EIDP, SYIL…NPFL, and GEQA…TPGN.

This sequence belongs to the Ycf3 family.

The protein resides in the plastid. It is found in the chloroplast thylakoid membrane. In terms of biological role, essential for the assembly of the photosystem I (PSI) complex. May act as a chaperone-like factor to guide the assembly of the PSI subunits. The protein is Photosystem I assembly protein Ycf3 of Atropa belladonna (Belladonna).